Here is a 193-residue protein sequence, read N- to C-terminus: V-type ATP synthase subunit E (193 aa).

The protein belongs to the V-ATPase E subunit family.

Functionally, produces ATP from ADP in the presence of a proton gradient across the membrane. The chain is V-type ATP synthase subunit E from Anaeromyxobacter sp. (strain Fw109-5).